A 380-amino-acid polypeptide reads, in one-letter code: Coiled-coil domain-containing protein 74B (380 aa).

3 disordered regions span residues Met1–Leu51, Leu89–Arg108, and Gly128–Gln202. Positions Leu34–Ser44 are enriched in polar residues. A coiled-coil region spans residues Gln47–Gln93. The segment covering Arg141–Arg151 has biased composition (basic residues). Residues Asp165–Gly182 show a composition bias toward polar residues.

The protein is Coiled-coil domain-containing protein 74B (CCDC74B) of Homo sapiens (Human).